We begin with the raw amino-acid sequence, 172 residues long: Small ribosomal subunit protein uS5 (172 aa).

Positions 17–80 constitute an S5 DRBM domain; that stretch reads LKEKMIAVNR…EEARRNMTKV (64 aa).

The protein belongs to the universal ribosomal protein uS5 family. In terms of assembly, part of the 30S ribosomal subunit. Contacts proteins S4 and S8.

In terms of biological role, with S4 and S12 plays an important role in translational accuracy. Located at the back of the 30S subunit body where it stabilizes the conformation of the head with respect to the body. The sequence is that of Small ribosomal subunit protein uS5 from Polaromonas sp. (strain JS666 / ATCC BAA-500).